A 111-amino-acid chain; its full sequence is MENVPKENKVVEKAPVQNEAPALGGGEYQEPGGNVKGVWAPPAPGFGEDVPNRLVDNIDMIDGDGDDMERFMEEMRELRRKIRELQLRYSLRILIGDPPHHDHHDEFCLMP.

The span at 1–12 shows a compositional bias: basic and acidic residues; the sequence is MENVPKENKVVE. Residues 1–37 are disordered; the sequence is MENVPKENKVVEKAPVQNEAPALGGGEYQEPGGNVKG. A his cluster region spans residues 100-104; sequence HHDHH. Cys-108 provides a ligand contact to Zn(2+).

The protein belongs to the BEX family. In terms of processing, ubiquitinated. Degraded by the proteasome.

The protein resides in the cytoplasm. The chain is Protein BEX5 (BEX5) from Homo sapiens (Human).